The sequence spans 806 residues: U3 small nucleolar RNA-associated protein 17 (806 aa).

WD repeat units lie at residues 266 to 305 (WHAN…RQFL), 448 to 489 (RNGL…KTWV), 499 to 538 (GNLE…SAWK), and 598 to 635 (PHGG…VQWT).

In terms of assembly, component of the ribosomal small subunit (SSU) processome.

It localises to the nucleus. The protein localises to the nucleolus. In terms of biological role, involved in nucleolar processing of pre-18S ribosomal RNA. Required for optimal pre-ribosomal RNA transcription by RNA polymerase I together with a subset of U3 proteins required for transcription (t-UTPs). The polypeptide is U3 small nucleolar RNA-associated protein 17 (utp17) (Schizosaccharomyces pombe (strain 972 / ATCC 24843) (Fission yeast)).